The sequence spans 124 residues: ATP synthase subunit H, mitochondrial (124 aa).

The transit peptide at 1–32 (MFPIASRRILLNASVLPLRLCNRNFTTTRISY) directs the protein to the mitochondrion. The tract at residues 89–124 (NVETAHVAKESEEGESEPIEEDWLVLDDAEETKESH) is disordered. The span at 100-124 (EEGESEPIEEDWLVLDDAEETKESH) shows a compositional bias: acidic residues.

Belongs to the ATPase h subunit family. As to quaternary structure, F-type ATPases have 2 components, CF(1) - the catalytic core - and CF(0) - the membrane proton channel. In yeast, the dimeric form of ATP synthase consists of 17 polypeptides: alpha, beta, gamma, delta, epsilon, 4 (B), 5 (OSCP), 6 (A), 8, 9 (C), d, E (Tim11), f, g, h, i/j and k.

The protein resides in the mitochondrion. It is found in the mitochondrion inner membrane. Its function is as follows. Mitochondrial membrane ATP synthase (F(1)F(0) ATP synthase or Complex V) produces ATP from ADP in the presence of a proton gradient across the membrane which is generated by electron transport complexes of the respiratory chain. F-type ATPases consist of two structural domains, F(1) - containing the extramembraneous catalytic core and F(0) - containing the membrane proton channel, linked together by a central stalk and a peripheral stalk. During catalysis, ATP synthesis in the catalytic domain of F(1) is coupled via a rotary mechanism of the central stalk subunits to proton translocation. Part of the complex F(0) domain. Minor subunit located with subunit a in the membrane. This Saccharomyces cerevisiae (strain ATCC 204508 / S288c) (Baker's yeast) protein is ATP synthase subunit H, mitochondrial (ATP14).